Reading from the N-terminus, the 287-residue chain is Glutamate racemase (287 aa).

A compositionally biased stretch (polar residues) spans 1 to 15 (MATKPQDANTTSREA). Residues 1–25 (MATKPQDANTTSREAITSKADSPPR) form a disordered region. Substrate contacts are provided by residues 32–33 (DS) and 64–65 (YG). C96 serves as the catalytic Proton donor/acceptor. Residue 97–98 (NT) coordinates substrate. The active-site Proton donor/acceptor is the C208. 209 to 210 (TH) provides a ligand contact to substrate.

This sequence belongs to the aspartate/glutamate racemases family.

It catalyses the reaction L-glutamate = D-glutamate. It participates in cell wall biogenesis; peptidoglycan biosynthesis. In terms of biological role, provides the (R)-glutamate required for cell wall biosynthesis. In Yersinia pseudotuberculosis serotype O:1b (strain IP 31758), this protein is Glutamate racemase.